Here is a 448-residue protein sequence, read N- to C-terminus: O-Mevalon transferase yanI (448 aa).

The N-linked (GlcNAc...) asparagine glycan is linked to Asn-2. A run of 8 helical transmembrane segments spans residues 21–41 (VLLS…LLAV), 54–74 (YGLL…PPPP), 79–96 (AVLY…ARYF), 165–185 (FVTA…LVEV), 217–237 (LIVL…VLPL), 316–336 (MLML…SYHV), 350–370 (VKYF…CWLL), and 390–410 (IVTA…PVAL).

Belongs to the wax synthase family.

Its subcellular location is the membrane. It participates in secondary metabolite biosynthesis; terpenoid biosynthesis. Functionally, O-Mevalon transferase yanI; part of the gene cluster that mediates the biosynthesis of yanuthone D, a fungal isoprenoid epoxycyclohexenone that acts as an antibiotic against fungi and bacteria. The first step of the pathway is the synthesis of 6-methylsalicylic acid (6-MSA) by the polyketide synthase yanA. 6-MSA is then converted to m-cresol by the decarboxylase yanB. The cytochrome P450 monooxygenase yanC then catalyzes the oxidation of m-cresol to toluquinol. Epoxidation of toluquinol is then performed by the short chain dehydrogenase yanD, with the help of yanE, and a further prenylation by yanG leads to 7-deacetoxyyanuthone A. The next step is the hydroxylation of C-22 of 7-deacetoxyyanuthone A by the cytochrome P450 monooxygenase yanH to yield 22-deacetylyanuthone A. O-Mevalon transferase yanI then attaches mevalon to the hydroxyl group of 22-deacetylyanuthone A to produce yanuthone E. Finally, the FAD-dependent monooxygenase yanF oxidizes the hydroxyl group at C15 of yanuthone E to form yanuthone D. Furthermore, several branching points in the pathway lead to the production of yanuthones F and G from 7-deacetoxyyanuthone A; yanuthones H and I from 22-deacetylyanuthone A; and yanuthone J from yanuthone E. The protein is O-Mevalon transferase yanI of Aspergillus niger (strain ATCC 1015 / CBS 113.46 / FGSC A1144 / LSHB Ac4 / NCTC 3858a / NRRL 328 / USDA 3528.7).